The sequence spans 492 residues: MTLWINGDWITGQGASRVKRNPVSGEVLWQGNDADAAQVEQACRAARAAFPRWARLSLAERQVVVERFAGLLESNKAELTAIIARETGKPRWEAATEVTAMINKIAISIKAYHVRTGEQRSEMPDGAASLRHRPHGVLAVFGPYNFPGHLPNGHIVPALLAGNTIIFKPSELTPWSGEAVMRLWQQAGLPPGVLNLVQGGRETGQALSALEDLDGLLFTGSANTGYQLHRQLSGQPEKILALEMGGNNPLIIDEVADIDAAVHLTIQSAFVTAGQRCTCARRLLLKSGAQGDAFLASLVAVSQRLTPGNWDDEPQPFIGGLISEQAAQQVVTAWQQLEAMGGRTLLAPRLLQAGTSLLTPGIIEMTGVGGVPDEEVFGPLLRVWRYDTFDEAIRMANNTRFGLFCGLVSPEREKFDQLLLEARAGIVNWNKPLTGAASTAPFGGIGASGNHRPSAWYAADYCAWPMASLESDSLTLPATLNPGLDFSDEVVR.

Residue 220-225 (GSANTG) coordinates NAD(+). Active-site residues include Glu243 and Cys277.

It belongs to the aldehyde dehydrogenase family. AstD subfamily.

The catalysed reaction is N-succinyl-L-glutamate 5-semialdehyde + NAD(+) + H2O = N-succinyl-L-glutamate + NADH + 2 H(+). It functions in the pathway amino-acid degradation; L-arginine degradation via AST pathway; L-glutamate and succinate from L-arginine: step 4/5. Functionally, catalyzes the NAD-dependent reduction of succinylglutamate semialdehyde into succinylglutamate. The protein is N-succinylglutamate 5-semialdehyde dehydrogenase of Shigella flexneri serotype 5b (strain 8401).